The following is a 151-amino-acid chain: Large ribosomal subunit protein uL13 (151 aa).

It belongs to the universal ribosomal protein uL13 family. As to quaternary structure, part of the 50S ribosomal subunit.

Functionally, this protein is one of the early assembly proteins of the 50S ribosomal subunit, although it is not seen to bind rRNA by itself. It is important during the early stages of 50S assembly. The protein is Large ribosomal subunit protein uL13 of Microcystis aeruginosa (strain NIES-843 / IAM M-2473).